We begin with the raw amino-acid sequence, 295 residues long: Indole-3-glycerol phosphate synthase (295 aa).

Belongs to the TrpC family.

It carries out the reaction 1-(2-carboxyphenylamino)-1-deoxy-D-ribulose 5-phosphate + H(+) = (1S,2R)-1-C-(indol-3-yl)glycerol 3-phosphate + CO2 + H2O. It functions in the pathway amino-acid biosynthesis; L-tryptophan biosynthesis; L-tryptophan from chorismate: step 4/5. The sequence is that of Indole-3-glycerol phosphate synthase from Prochlorococcus marinus subsp. pastoris (strain CCMP1986 / NIES-2087 / MED4).